Here is an 822-residue protein sequence, read N- to C-terminus: Glycerol-3-phosphate acyltransferase (822 aa).

The HXXXXD motif signature appears at 304–309 (CHRSHM).

Belongs to the GPAT/DAPAT family.

The protein resides in the cell inner membrane. The enzyme catalyses sn-glycerol 3-phosphate + an acyl-CoA = a 1-acyl-sn-glycero-3-phosphate + CoA. It participates in phospholipid metabolism; CDP-diacylglycerol biosynthesis; CDP-diacylglycerol from sn-glycerol 3-phosphate: step 1/3. The protein is Glycerol-3-phosphate acyltransferase of Yersinia enterocolitica serotype O:8 / biotype 1B (strain NCTC 13174 / 8081).